A 193-amino-acid chain; its full sequence is AP-3 complex subunit sigma-2 (193 aa).

It belongs to the adaptor complexes small subunit family. In terms of assembly, adaptor protein complex 3 (AP-3) is a heterotetramer composed of two large adaptins (delta-type subunit AP3D1 and beta-type subunit AP3B1 or AP3B2), a medium adaptin (mu-type subunit AP3M1 or AP3M2) and a small adaptin (sigma-type subunit APS1 or AP3S2). Interacts with AGAP1. AP-3 associates with the BLOC-1 complex. Present in all adult tissues examined.

It localises to the golgi apparatus. The protein resides in the cytoplasmic vesicle membrane. Functionally, part of the AP-3 complex, an adaptor-related complex which is not clathrin-associated. The complex is associated with the Golgi region as well as more peripheral structures. It facilitates the budding of vesicles from the Golgi membrane and may be directly involved in trafficking to lysosomes. In concert with the BLOC-1 complex, AP-3 is required to target cargos into vesicles assembled at cell bodies for delivery into neurites and nerve terminals. In Homo sapiens (Human), this protein is AP-3 complex subunit sigma-2 (AP3S2).